The primary structure comprises 453 residues: Bifunctional protein GlmU (453 aa).

Positions 1 to 226 (MKFSAVILAA…AIEVEGVNDR (226 aa)) are pyrophosphorylase. Residues 8–11 (LAAG), K22, Q73, 78–79 (GT), 100–102 (YGD), G137, E151, N166, and N224 contribute to the UDP-N-acetyl-alpha-D-glucosamine site. D102 is a Mg(2+) binding site. N224 lines the Mg(2+) pocket. The segment at 227-247 (AQLARLERAFQSMQAQKLLEQ) is linker. Residues 248–453 (GVMLRDPARF…TGWQRPVKQK (206 aa)) form an N-acetyltransferase region. Residues R330 and K348 each coordinate UDP-N-acetyl-alpha-D-glucosamine. H360 functions as the Proton acceptor in the catalytic mechanism. Y363 and N374 together coordinate UDP-N-acetyl-alpha-D-glucosamine. Acetyl-CoA contacts are provided by residues A377, 383 to 384 (NY), S402, A420, and R437.

This sequence in the N-terminal section; belongs to the N-acetylglucosamine-1-phosphate uridyltransferase family. In the C-terminal section; belongs to the transferase hexapeptide repeat family. In terms of assembly, homotrimer. Mg(2+) serves as cofactor.

The protein localises to the cytoplasm. The catalysed reaction is alpha-D-glucosamine 1-phosphate + acetyl-CoA = N-acetyl-alpha-D-glucosamine 1-phosphate + CoA + H(+). The enzyme catalyses N-acetyl-alpha-D-glucosamine 1-phosphate + UTP + H(+) = UDP-N-acetyl-alpha-D-glucosamine + diphosphate. It participates in nucleotide-sugar biosynthesis; UDP-N-acetyl-alpha-D-glucosamine biosynthesis; N-acetyl-alpha-D-glucosamine 1-phosphate from alpha-D-glucosamine 6-phosphate (route II): step 2/2. The protein operates within nucleotide-sugar biosynthesis; UDP-N-acetyl-alpha-D-glucosamine biosynthesis; UDP-N-acetyl-alpha-D-glucosamine from N-acetyl-alpha-D-glucosamine 1-phosphate: step 1/1. Its pathway is bacterial outer membrane biogenesis; LPS lipid A biosynthesis. Catalyzes the last two sequential reactions in the de novo biosynthetic pathway for UDP-N-acetylglucosamine (UDP-GlcNAc). The C-terminal domain catalyzes the transfer of acetyl group from acetyl coenzyme A to glucosamine-1-phosphate (GlcN-1-P) to produce N-acetylglucosamine-1-phosphate (GlcNAc-1-P), which is converted into UDP-GlcNAc by the transfer of uridine 5-monophosphate (from uridine 5-triphosphate), a reaction catalyzed by the N-terminal domain. The polypeptide is Bifunctional protein GlmU (Vibrio parahaemolyticus serotype O3:K6 (strain RIMD 2210633)).